The following is an 89-amino-acid chain: Small ribosomal subunit protein uS15 (89 aa).

It belongs to the universal ribosomal protein uS15 family. In terms of assembly, part of the 30S ribosomal subunit. Forms a bridge to the 50S subunit in the 70S ribosome, contacting the 23S rRNA.

In terms of biological role, one of the primary rRNA binding proteins, it binds directly to 16S rRNA where it helps nucleate assembly of the platform of the 30S subunit by binding and bridging several RNA helices of the 16S rRNA. Its function is as follows. Forms an intersubunit bridge (bridge B4) with the 23S rRNA of the 50S subunit in the ribosome. This Rhizobium meliloti (strain 1021) (Ensifer meliloti) protein is Small ribosomal subunit protein uS15.